A 69-amino-acid chain; its full sequence is MGMRMMFTVFLLVVLATTVVSFTSDSAFDSRNVAANDKVSDMIALTARRTCCSRPTCRMEYPELCGGRR.

The N-terminal stretch at 1–21 is a signal peptide; it reads MGMRMMFTVFLLVVLATTVVS. Positions 22 to 48 are excised as a propeptide; sequence FTSDSAFDSRNVAANDKVSDMIALTAR. Disulfide bonds link Cys51-Cys57 and Cys52-Cys65. Residues 53 to 55 are ser-Xaa-Pro motif, crucial for potent interaction with nAChR; that stretch reads SRP. 4-hydroxyproline; in form Sr1A and Sr1B is present on Pro55. Glu60 carries the post-translational modification 4-carboxyglutamate; in form Sr1A. Position 63 is a 4-carboxyglutamate; in form Sr1A and Sr1B (Glu63). Gly66 bears the Glycine amide; in form Sr1A and Sr1B mark.

This sequence belongs to the conotoxin A superfamily. In terms of processing, occurs in 2 forms which differ in the post-translational modification of Glu-60. In form SrA1 Glu-60 is 4-carboxyglutamate while in form SrA2 Glu-60 is unmodified. Expressed by the venom duct.

Its subcellular location is the secreted. Its function is as follows. Alpha-conotoxins act on postsynaptic membranes, they bind to the nicotinic acetylcholine receptors (nAChR) and thus inhibit them. Has weak blocking effects on muscle nAChR composed of alpha-1/beta-1/gamma/delta subunits and the central nervous system nAChR composed of alpha-4/beta-2 subunits. Does not detectably affect the peripheral nervous system nAChR composed of alpha-3/beta-4 subunits. Low toxin concentrations potentiate currents in muscle nAChR composed of alpha-1/beta-1/gamma/delta subunits and central nervous system nAChR composed of alpha-4/beta-2 subunits, but not the peripheral nervous system nAChR composed of alpha-3/beta-4 subunits. This Conus spurius (Alphabet cone) protein is Alpha-conotoxin SrIA/SrIB.